The following is a 118-amino-acid chain: UPF0251 protein TTE1845 (118 aa).

The protein belongs to the UPF0251 family.

This Caldanaerobacter subterraneus subsp. tengcongensis (strain DSM 15242 / JCM 11007 / NBRC 100824 / MB4) (Thermoanaerobacter tengcongensis) protein is UPF0251 protein TTE1845.